The chain runs to 69 residues: DNA-directed RNA polymerase subunit epsilon (69 aa).

It belongs to the RNA polymerase subunit epsilon family. In terms of assembly, RNAP is composed of a core of 2 alpha, a beta and a beta' subunit. The core is associated with a delta subunit, and at least one of epsilon or omega. When a sigma factor is associated with the core the holoenzyme is formed, which can initiate transcription.

The catalysed reaction is RNA(n) + a ribonucleoside 5'-triphosphate = RNA(n+1) + diphosphate. A non-essential component of RNA polymerase (RNAP). The sequence is that of DNA-directed RNA polymerase subunit epsilon from Bacillus pumilus (strain SAFR-032).